The sequence spans 312 residues: Malate dehydrogenase (312 aa).

Residues 12 to 17 and Asp36 contribute to the NAD(+) site; that span reads GAGFTG. Arg87 and Arg93 together coordinate substrate. Residues Asn100 and 123–125 contribute to the NAD(+) site; that span reads LTN. Asn125 lines the substrate pocket. The residue at position 149 (Ser149) is a Phosphoserine. Arg156 is a substrate binding site. His180 functions as the Proton acceptor in the catalytic mechanism.

It belongs to the LDH/MDH superfamily. MDH type 3 family.

The catalysed reaction is (S)-malate + NAD(+) = oxaloacetate + NADH + H(+). Its function is as follows. Catalyzes the reversible oxidation of malate to oxaloacetate. The sequence is that of Malate dehydrogenase from Bacillus cereus (strain ATCC 14579 / DSM 31 / CCUG 7414 / JCM 2152 / NBRC 15305 / NCIMB 9373 / NCTC 2599 / NRRL B-3711).